Reading from the N-terminus, the 292-residue chain is Phosphatidylglycerol--prolipoprotein diacylglyceryl transferase (292 aa).

The next 4 membrane-spanning stretches (helical) occupy residues 24 to 44 (ISVHWYGIMYVSAMLIALLIA), 65 to 85 (FFIWVEIGVILGGRIGYVLIY), 110 to 130 (GISGFSYHGAMAGFVLAAIIF), and 136 to 156 (QSFWIFMDLSAISIPLGYVFG). Residue R157 participates in a 1,2-diacyl-sn-glycero-3-phospho-(1'-sn-glycerol) binding. 3 consecutive transmembrane segments (helical) span residues 192–212 (SQLFEAFAEGIIVFILLICLL), 219–239 (GTLLVAYGVFYALARFVCEYF), and 256–276 (GQILSLVMLVISIFLGLFVFV).

Belongs to the Lgt family.

It is found in the cell inner membrane. It catalyses the reaction L-cysteinyl-[prolipoprotein] + a 1,2-diacyl-sn-glycero-3-phospho-(1'-sn-glycerol) = an S-1,2-diacyl-sn-glyceryl-L-cysteinyl-[prolipoprotein] + sn-glycerol 1-phosphate + H(+). It participates in protein modification; lipoprotein biosynthesis (diacylglyceryl transfer). Catalyzes the transfer of the diacylglyceryl group from phosphatidylglycerol to the sulfhydryl group of the N-terminal cysteine of a prolipoprotein, the first step in the formation of mature lipoproteins. In Helicobacter hepaticus (strain ATCC 51449 / 3B1), this protein is Phosphatidylglycerol--prolipoprotein diacylglyceryl transferase.